The sequence spans 689 residues: Glycine--tRNA ligase beta subunit (689 aa).

The protein belongs to the class-II aminoacyl-tRNA synthetase family. Tetramer of two alpha and two beta subunits.

It localises to the cytoplasm. It carries out the reaction tRNA(Gly) + glycine + ATP = glycyl-tRNA(Gly) + AMP + diphosphate. In Klebsiella pneumoniae (strain 342), this protein is Glycine--tRNA ligase beta subunit.